Here is a 1861-residue protein sequence, read N- to C-terminus: Amylopullulanase (1861 aa).

An N-terminal signal peptide occupies residues 1-35 (MNKKLFTNRFISFNMSLLLVLTAVFSSIPLHSVHA). Ca(2+) contacts are provided by D248, N250, D288, D343, N401, D403, N406, D407, and D453. Substrate is bound by residues H526 and R626. D628 functions as the Nucleophile in the catalytic mechanism. The active-site Proton donor is E657. Substrate-binding positions include 733–734 (HD), D793, and R797. Fibronectin type-III domains lie at 929–1021 (APQA…AYPI) and 1158–1252 (KPTA…VVPI). The 109-residue stretch at 1246–1354 (KPDVVPIKVI…INDTVYRWRD (109 aa)) folds into the CBM20 domain. Residues 1448–1486 (QENNSGSGTGNNNTSTSGSNSSSTGSGSTGSTSITSNIS) are disordered. Residues 1450–1486 (NNSGSGTGNNNTSTSGSNSSSTGSGSTGSTSITSNIS) show a composition bias toward low complexity. 3 SLH domains span residues 1677–1740 (EYDK…YSGE), 1741–1799 (FSDV…KEEN), and 1802–1861 (ATTF…SGNI).

It belongs to the glycosyl hydrolase 13 family. Ca(2+) serves as cofactor. Post-translationally, glycosylated.

Its subcellular location is the secreted. The protein resides in the cell wall. The enzyme catalyses Endohydrolysis of (1-&gt;4)-alpha-D-glucosidic linkages in polysaccharides containing three or more (1-&gt;4)-alpha-linked D-glucose units.. The catalysed reaction is Hydrolysis of (1-&gt;6)-alpha-D-glucosidic linkages in pullulan, amylopectin and glycogen, and in the alpha- and beta-limit dextrins of amylopectin and glycogen.. The chain is Amylopullulanase (amyB) from Thermoanaerobacterium thermosulfurigenes (Clostridium thermosulfurogenes).